The following is a 71-amino-acid chain: MGRKKESFENMLEKLETIVDSMDNGEITLEDSMKSYEEGIKLCNKLYKVLKDAEGKIKILEDNKEEDFENS.

The protein belongs to the XseB family. In terms of assembly, heterooligomer composed of large and small subunits.

The protein resides in the cytoplasm. The enzyme catalyses Exonucleolytic cleavage in either 5'- to 3'- or 3'- to 5'-direction to yield nucleoside 5'-phosphates.. Its function is as follows. Bidirectionally degrades single-stranded DNA into large acid-insoluble oligonucleotides, which are then degraded further into small acid-soluble oligonucleotides. This is Exodeoxyribonuclease 7 small subunit from Clostridium botulinum (strain 657 / Type Ba4).